Reading from the N-terminus, the 255-residue chain is tRNA pseudouridine synthase A (255 aa).

The active-site Nucleophile is the aspartate 53. Substrate is bound at residue tyrosine 113.

It belongs to the tRNA pseudouridine synthase TruA family. In terms of assembly, homodimer.

The catalysed reaction is uridine(38/39/40) in tRNA = pseudouridine(38/39/40) in tRNA. In terms of biological role, formation of pseudouridine at positions 38, 39 and 40 in the anticodon stem and loop of transfer RNAs. This Acidiphilium cryptum (strain JF-5) protein is tRNA pseudouridine synthase A.